We begin with the raw amino-acid sequence, 119 residues long: Basic phospholipase A2 notexin (119 aa).

7 disulfides stabilise this stretch: C11/C71, C27/C118, C29/C45, C44/C99, C51/C92, C60/C85, and C78/C90. Residues Y28, G30, and G32 each contribute to the Ca(2+) site. The active site involves H48. A Ca(2+)-binding site is contributed by D49. The active site involves D93.

Belongs to the phospholipase A2 family. Group I subfamily. D49 sub-subfamily. In terms of assembly, monomer. Requires Ca(2+) as cofactor. Expressed by the venom gland.

It localises to the secreted. The enzyme catalyses a 1,2-diacyl-sn-glycero-3-phosphocholine + H2O = a 1-acyl-sn-glycero-3-phosphocholine + a fatty acid + H(+). Snake venom phospholipase A2 (PLA2) that inhibits neuromuscular transmission by blocking acetylcholine release from the nerve termini. Is directly toxic to skeletal muscle upon local application in vivo (dystrophic effect). Also has direct nephrotoxicity in experimental mice; a single subcutaneous dose (1.38 ug/kg) produces renal tubular and glomerular damage within 24 hours. PLA2 catalyzes the calcium-dependent hydrolysis of the 2-acyl groups in 3-sn-phosphoglycerides. This Notechis scutatus scutatus (Mainland tiger snake) protein is Basic phospholipase A2 notexin.